A 329-amino-acid chain; its full sequence is Coiled-coil domain-containing protein 54 (329 aa).

A coiled-coil region spans residues 86–149 (NIVSSISNIQ…VTELESQNSY (64 aa)). Over residues 178-191 (TPKGTATSPDTVIS) the composition is skewed to polar residues. Residues 178-214 (TPKGTATSPDTVISSAEPERVSSYPEPTGELKKKTTS) are disordered. Thr182 is modified (phosphothreonine).

The polypeptide is Coiled-coil domain-containing protein 54 (Ccdc54) (Mus musculus (Mouse)).